The chain runs to 250 residues: MTDILIDNTATETVRTLIRAFPLVPVSQPPEQGSYLLAEHDTVSLRLVGEKSSVIVDFASGAAQYRRTKGGGELIAKAVNHTAHPTVWDATAGLGRDSFVLASLGLAVTAFEQHPAVACLLSDGIRRALLNPETQDTAAHINLHFGNAAEQMPALVQTQGKPDIVYLDPMYPERRKSAAVKKEMTYFHRLVGEAQDEAALLHTARQTAKKRVVVKRPRLGEHLAGQAPAYQYTGKSTRFDVYLPYGTDKG.

S-adenosyl-L-methionine is bound by residues 96-97 and Asp168; that span reads RD.

Belongs to the methyltransferase superfamily. RsmJ family.

It localises to the cytoplasm. It carries out the reaction guanosine(1516) in 16S rRNA + S-adenosyl-L-methionine = N(2)-methylguanosine(1516) in 16S rRNA + S-adenosyl-L-homocysteine + H(+). Its function is as follows. Specifically methylates the guanosine in position 1516 of 16S rRNA. This chain is Ribosomal RNA small subunit methyltransferase J, found in Neisseria meningitidis serogroup C (strain 053442).